The sequence spans 238 residues: Ribonuclease PH (238 aa).

Phosphate contacts are provided by residues Arg-86 and Gly-124–Arg-126.

This sequence belongs to the RNase PH family. Homohexameric ring arranged as a trimer of dimers.

It catalyses the reaction tRNA(n+1) + phosphate = tRNA(n) + a ribonucleoside 5'-diphosphate. Functionally, phosphorolytic 3'-5' exoribonuclease that plays an important role in tRNA 3'-end maturation. Removes nucleotide residues following the 3'-CCA terminus of tRNAs; can also add nucleotides to the ends of RNA molecules by using nucleoside diphosphates as substrates, but this may not be physiologically important. Probably plays a role in initiation of 16S rRNA degradation (leading to ribosome degradation) during starvation. This is Ribonuclease PH from Enterobacter sp. (strain 638).